Reading from the N-terminus, the 62-residue chain is Sec-independent protein translocase protein TatAc (62 aa).

The helical transmembrane segment at 8-28 (ILVILFVGFLVFGPDKLPALG) threads the bilayer.

The protein belongs to the TatA/E family. In terms of assembly, forms a complex with TatC.

It is found in the cell membrane. In terms of biological role, part of the twin-arginine translocation (Tat) system that transports large folded proteins containing a characteristic twin-arginine motif in their signal peptide across membranes. TatA could form the protein-conducting channel of the Tat system. The chain is Sec-independent protein translocase protein TatAc from Bacillus subtilis (strain 168).